Reading from the N-terminus, the 138-residue chain is Small ribosomal subunit protein uS11c (138 aa).

The interval 1 to 23 (MAKPILRIGSRKNTRSGSRKNVR) is disordered. The segment covering 9-23 (GSRKNTRSGSRKNVR) has biased composition (basic residues).

The protein belongs to the universal ribosomal protein uS11 family. In terms of assembly, part of the 30S ribosomal subunit.

It is found in the plastid. The protein localises to the chloroplast. This Crucihimalaya wallichii (Rock-cress) protein is Small ribosomal subunit protein uS11c.